Here is a 119-residue protein sequence, read N- to C-terminus: Ribonuclease P protein component (119 aa).

This sequence belongs to the RnpA family. Consists of a catalytic RNA component (M1 or rnpB) and a protein subunit.

It catalyses the reaction Endonucleolytic cleavage of RNA, removing 5'-extranucleotides from tRNA precursor.. RNaseP catalyzes the removal of the 5'-leader sequence from pre-tRNA to produce the mature 5'-terminus. It can also cleave other RNA substrates such as 4.5S RNA. The protein component plays an auxiliary but essential role in vivo by binding to the 5'-leader sequence and broadening the substrate specificity of the ribozyme. The protein is Ribonuclease P protein component of Pectobacterium atrosepticum (strain SCRI 1043 / ATCC BAA-672) (Erwinia carotovora subsp. atroseptica).